A 115-amino-acid chain; its full sequence is NADH-ubiquinone oxidoreductase chain 3 (115 aa).

Helical transmembrane passes span 4–24 (MLIL…AFWL), 55–75 (FFLV…LLPL), and 86–106 (MLMT…AYEW).

It belongs to the complex I subunit 3 family. Core subunit of respiratory chain NADH dehydrogenase (Complex I) which is composed of 45 different subunits. Interacts with TMEM186. Interacts with TMEM242.

It is found in the mitochondrion inner membrane. It catalyses the reaction a ubiquinone + NADH + 5 H(+)(in) = a ubiquinol + NAD(+) + 4 H(+)(out). In terms of biological role, core subunit of the mitochondrial membrane respiratory chain NADH dehydrogenase (Complex I) which catalyzes electron transfer from NADH through the respiratory chain, using ubiquinone as an electron acceptor. Essential for the catalytic activity of complex I. The polypeptide is NADH-ubiquinone oxidoreductase chain 3 (Microtus pennsylvanicus (Meadow vole)).